The primary structure comprises 163 residues: Ribonuclease H (163 aa).

An RNase H type-1 domain is found at 16–157 (TTSPVEIYCD…CDSLARQAIT (142 aa)). Mg(2+) is bound by residues aspartate 25, glutamate 63, aspartate 85, and aspartate 149.

Belongs to the RNase H family. In terms of assembly, monomer. Requires Mg(2+) as cofactor.

Its subcellular location is the cytoplasm. It carries out the reaction Endonucleolytic cleavage to 5'-phosphomonoester.. Functionally, endonuclease that specifically degrades the RNA of RNA-DNA hybrids. This is Ribonuclease H from Pelobacter propionicus (strain DSM 2379 / NBRC 103807 / OttBd1).